Reading from the N-terminus, the 327-residue chain is Cyclic AMP-responsive element-binding protein 1 (327 aa).

2 disordered regions span residues 1–26 and 94–113; these read MTMESGAENQQSGDAAVTEAENQQMT and SEDSQESVDSVTDSQKRREI. Positions 87-146 constitute a KID domain; the sequence is QISTIAESEDSQESVDSVTDSQKRREILSRRPSYRKILNDLSSDAPGVPRIEEEKSEEET. At Ser-119 the chain carries Phosphoserine; by CaMK1, CaMK2, CaMK4, PKB/AKT1 or PKB/AKT2, RPS6KA3, RPS6KA4, RPS6KA5, SGK1 and TSSK4. A Glycyl lysine isopeptide (Lys-Gly) (interchain with G-Cter in SUMO2) cross-link involves residue Lys-122. Residues 125–148 form a disordered region; sequence NDLSSDAPGVPRIEEEKSEEETSA. The residue at position 128 (Ser-128) is a Phosphoserine. At Ser-257 the chain carries Phosphoserine; by HIPK2. A bZIP domain is found at 269 to 327; that stretch reads ARKREVRLMKNREAARECRRKKKEYVKCLENRVAVLENQNKTLIEELKALKDLYCHKSD. Positions 270-295 are basic motif; that stretch reads RKREVRLMKNREAARECRRKKKEYVK. Residues Lys-271 and Lys-290 each participate in a glycyl lysine isopeptide (Lys-Gly) (interchain with G-Cter in SUMO1) cross-link. The segment at 297 to 318 is leucine-zipper; it reads LENRVAVLENQNKTLIEELKAL.

It belongs to the bZIP family. In terms of assembly, interacts with PPRC1. Binds DNA as a dimer. This dimer is stabilized by magnesium ions. Interacts, through the bZIP domain, with the coactivators CRTC1/TORC1, CRTC2/TORC2 and CRTC3/TORC3. When phosphorylated on Ser-119, binds CREBBP. Interacts with CREBL2; regulates CREB1 phosphorylation, stability and transcriptional activity. Interacts (phosphorylated form) with TOX3. Interacts with ARRB1. Binds to HIPK2. Interacts with SGK1. Interacts with TSSK4; this interaction facilitates phosphorylation on Ser-119. Forms a complex with KMT2A and CREBBP. Interacts with TOX4; CREB1 is required for full induction of TOX4-dependent activity and the interaction is increased by cAMP and inhibited by insulin. (Microbial infection) Interacts with hepatitis B virus/HBV protein X. As to quaternary structure, (Microbial infection) Interacts with HTLV-1 protein Tax. In terms of processing, stimulated by phosphorylation. Phosphorylation of both Ser-119 and Ser-128 in the SCN regulates the activity of CREB and participates in circadian rhythm generation. Phosphorylation of Ser-119 allows CREBBP binding. In liver, phosphorylation is induced by fasting or glucagon in a circadian fashion. CREBL2 positively regulates phosphorylation at Ser-119 thereby stimulating CREB1 transcriptional activity. Phosphorylated upon calcium influx by CaMK4 and CaMK2 on Ser-119. CaMK4 is much more potent than CaMK2 in activating CREB. Phosphorylated by CaMK2 on Ser-128. Phosphorylation of Ser-128 blocks CREB-mediated transcription even when Ser-119 is phosphorylated. Phosphorylated by CaMK1. Phosphorylation of Ser-257 by HIPK2 in response to genotoxic stress promotes CREB1 activity, facilitating the recruitment of the coactivator CBP. Phosphorylated at Ser-119 by RPS6KA3, RPS6KA4 and RPS6KA5 in response to mitogenic or stress stimuli. Phosphorylated by TSSK4 on Ser-119. Post-translationally, sumoylated with SUMO1. Sumoylation on Lys-290, but not on Lys-271, is required for nuclear localization of this protein. Sumoylation is enhanced under hypoxia, promoting nuclear localization and stabilization.

It is found in the nucleus. Functionally, phosphorylation-dependent transcription factor that stimulates transcription upon binding to the DNA cAMP response element (CRE), a sequence present in many viral and cellular promoters. Transcription activation is enhanced by the TORC coactivators which act independently of Ser-119 phosphorylation. Involved in different cellular processes including the synchronization of circadian rhythmicity and the differentiation of adipose cells. Regulates the expression of apoptotic and inflammatory response factors in cardiomyocytes in response to ERFE-mediated activation of AKT signaling. In Homo sapiens (Human), this protein is Cyclic AMP-responsive element-binding protein 1 (CREB1).